The following is a 65-amino-acid chain: Large ribosomal subunit protein bL35 (65 aa).

The protein belongs to the bacterial ribosomal protein bL35 family.

This chain is Large ribosomal subunit protein bL35, found in Parabacteroides distasonis (strain ATCC 8503 / DSM 20701 / CIP 104284 / JCM 5825 / NCTC 11152).